A 288-amino-acid chain; its full sequence is Homoserine kinase (288 aa).

79–89 (PPARGLGSSSA) is a binding site for ATP.

Belongs to the GHMP kinase family. Homoserine kinase subfamily.

The protein localises to the cytoplasm. The catalysed reaction is L-homoserine + ATP = O-phospho-L-homoserine + ADP + H(+). The protein operates within amino-acid biosynthesis; L-threonine biosynthesis; L-threonine from L-aspartate: step 4/5. Catalyzes the ATP-dependent phosphorylation of L-homoserine to L-homoserine phosphate. The chain is Homoserine kinase from Listeria monocytogenes serotype 4b (strain F2365).